Reading from the N-terminus, the 91-residue chain is UPF0213 protein NMA2126 (91 aa).

One can recognise a GIY-YIG domain in the interval 4 to 83 (SNWSLYLILC…AAQKRKLWEQ (80 aa)).

This sequence belongs to the UPF0213 family.

The chain is UPF0213 protein NMA2126 from Neisseria meningitidis serogroup A / serotype 4A (strain DSM 15465 / Z2491).